We begin with the raw amino-acid sequence, 382 residues long: Alkanesulfonate monooxygenase (382 aa).

It belongs to the SsuD family.

The catalysed reaction is an alkanesulfonate + FMNH2 + O2 = an aldehyde + FMN + sulfite + H2O + 2 H(+). Catalyzes the desulfonation of aliphatic sulfonates. The polypeptide is Alkanesulfonate monooxygenase (Pseudomonas sp).